The primary structure comprises 429 residues: UDP-N-acetylglucosamine 1-carboxyvinyltransferase 2 (429 aa).

22–23 (KN) serves as a coordination point for phosphoenolpyruvate. UDP-N-acetyl-alpha-D-glucosamine is bound at residue Arg-92. Cys-116 serves as the catalytic Proton donor. At Cys-116 the chain carries 2-(S-cysteinyl)pyruvic acid O-phosphothioketal. Residues 121-125 (RPIDQ), Asp-305, and Ile-327 each bind UDP-N-acetyl-alpha-D-glucosamine.

Belongs to the EPSP synthase family. MurA subfamily.

The protein resides in the cytoplasm. It catalyses the reaction phosphoenolpyruvate + UDP-N-acetyl-alpha-D-glucosamine = UDP-N-acetyl-3-O-(1-carboxyvinyl)-alpha-D-glucosamine + phosphate. The protein operates within cell wall biogenesis; peptidoglycan biosynthesis. Cell wall formation. Adds enolpyruvyl to UDP-N-acetylglucosamine. This chain is UDP-N-acetylglucosamine 1-carboxyvinyltransferase 2, found in Bacillus subtilis (strain 168).